A 213-amino-acid chain; its full sequence is Orotate phosphoribosyltransferase (213 aa).

Residue K26 participates in 5-phospho-alpha-D-ribose 1-diphosphate binding. 34-35 contacts orotate; the sequence is FF. Residues 72 to 73, R99, K100, K103, H105, and 124 to 132 contribute to the 5-phospho-alpha-D-ribose 1-diphosphate site; these read YK and DDVITAGTA. Residues T128 and R156 each coordinate orotate.

Belongs to the purine/pyrimidine phosphoribosyltransferase family. PyrE subfamily. Homodimer. The cofactor is Mg(2+).

It catalyses the reaction orotidine 5'-phosphate + diphosphate = orotate + 5-phospho-alpha-D-ribose 1-diphosphate. The protein operates within pyrimidine metabolism; UMP biosynthesis via de novo pathway; UMP from orotate: step 1/2. In terms of biological role, catalyzes the transfer of a ribosyl phosphate group from 5-phosphoribose 1-diphosphate to orotate, leading to the formation of orotidine monophosphate (OMP). This is Orotate phosphoribosyltransferase from Vibrio vulnificus (strain CMCP6).